Reading from the N-terminus, the 144-residue chain is Deoxyuridine 5'-triphosphate nucleotidohydrolase (144 aa).

Substrate is bound by residues 63–65 (RSG), asparagine 76, and 80–82 (TID).

The protein belongs to the dUTPase family. Mg(2+) is required as a cofactor.

The enzyme catalyses dUTP + H2O = dUMP + diphosphate + H(+). Its pathway is pyrimidine metabolism; dUMP biosynthesis; dUMP from dCTP (dUTP route): step 2/2. Its function is as follows. This enzyme is involved in nucleotide metabolism: it produces dUMP, the immediate precursor of thymidine nucleotides and it decreases the intracellular concentration of dUTP so that uracil cannot be incorporated into DNA. In Bacteroides thetaiotaomicron (strain ATCC 29148 / DSM 2079 / JCM 5827 / CCUG 10774 / NCTC 10582 / VPI-5482 / E50), this protein is Deoxyuridine 5'-triphosphate nucleotidohydrolase.